A 761-amino-acid polypeptide reads, in one-letter code: Wall-associated receptor kinase-like 4 (761 aa).

The first 26 residues, 1–26, serve as a signal peptide directing secretion; sequence MKKETQNLQCIPLVISVLSLFGVSSA. Topologically, residues 27–349 are extracellular; the sequence is RKPPYLCNRV…EPKKPGQIKP (323 aa). Asparagine 64, asparagine 166, asparagine 206, asparagine 226, and asparagine 262 each carry an N-linked (GlcNAc...) asparagine glycan. Positions 278–339 are atypical EGF-like; that stretch reads CVCSYGYFSG…CVNKPGWFTC (62 aa). 3 cysteine pairs are disulfide-bonded: cysteine 280-cysteine 293, cysteine 316-cysteine 330, and cysteine 325-cysteine 339. Residues 350–370 form a helical membrane-spanning segment; sequence VFQGVLIGSALLLFAFGIFGL. Topologically, residues 371 to 761 are cytoplasmic; the sequence is YKFIKKQRRS…VEPLVPLRTW (391 aa). The Protein kinase domain occupies 424–697; sequence FNTNRVLGQG…REVSVELERI (274 aa). ATP is bound by residues 430–438 and lysine 452; that span reads LGQGGQGTV. Tyrosine 497 is modified (phosphotyrosine). The active-site Proton acceptor is aspartate 549. Phosphothreonine occurs at positions 583 and 588. Tyrosine 596 is subject to Phosphotyrosine. The interval 701-761 is disordered; it reads SYKSEIHNDD…VEPLVPLRTW (61 aa). Over residues 708 to 732 the composition is skewed to acidic residues; sequence NDDDDDDDDDDEDDQAMELNIEETW.

This sequence belongs to the protein kinase superfamily. Ser/Thr protein kinase family. In terms of tissue distribution, expressed in the whole plant. Detected in root-shoot junctions and lateral root initiation sites.

Its subcellular location is the membrane. The enzyme catalyses L-seryl-[protein] + ATP = O-phospho-L-seryl-[protein] + ADP + H(+). It carries out the reaction L-threonyl-[protein] + ATP = O-phospho-L-threonyl-[protein] + ADP + H(+). Functionally, serine/threonine-protein kinase that may function as a signaling receptor of extracellular matrix component. Plays a role in plant mineral nutrients response. This is Wall-associated receptor kinase-like 4 (WAKL4) from Arabidopsis thaliana (Mouse-ear cress).